A 773-amino-acid chain; its full sequence is C-Maf-inducing protein (773 aa).

The interval 1 to 30 is disordered; the sequence is MDVTSSSGGGGDPRQIEETKPLLGGDVSAP. Residues 54–163 enclose the PH domain; the sequence is LLQEGDIQVC…HSLQWKKKIY (110 aa). 4 positions are modified to phosphoserine: Ser-349, Ser-377, Ser-382, and Ser-660. LRR repeat units follow at residues 663-686, 687-707, 712-732, and 736-756; these read NLEN…IKLP, SLKQ…RLLS, MLQV…LALS, and SLCS…EDLK.

As to quaternary structure, interacts with FLNA. Isoform 1 is expressed in peripheral blood mononuclear cells and kidney. Lower expression in brain and liver. Expression is down-regulated in activated cells. Isoform 2 is expressed in lymphocyte precursors, however, expression shuts down during maturation and differentiation in thymus and fetal liver.

It is found in the nucleus. Its subcellular location is the cytoplasm. Functionally, plays a role in T-cell signaling pathway. Isoform 2 may play a role in T-helper 2 (Th2) signaling pathway and seems to represent the first proximal signaling protein that links T-cell receptor-mediated signal to the activation of c-Maf Th2 specific factor. This is C-Maf-inducing protein (CMIP) from Homo sapiens (Human).